Reading from the N-terminus, the 1196-residue chain is NACHT, LRR and PYD domains-containing protein 1b allele 5 (1196 aa).

Positions 1–22 (MEESPPKQKSNTKVTQHEGQQD) are disordered. Residues 126 to 435 (QLVIIEGAAG…EFFAAISCIL (310 aa)) enclose the NACHT domain. 132-139 (GAAGIGKS) serves as a coordination point for ATP. 2 LRR repeats span residues 627–647 (NLEG…QSLC) and 684–704 (SLTE…RMLC). The segment at 789-922 (FWGPTGPVAT…GYTVLKNPSF (134 aa)) is ZU5. Residues 789 to 1072 (FWGPTGPVAT…KFDHLCDQEF (284 aa)) enclose the FIIND domain. The tract at residues 923 to 1072 (SPMGVVLRII…KFDHLCDQEF (150 aa)) is UPA. Positions 1106–1189 (HFMDQHREQL…HLVMDLFEKS (84 aa)) constitute a CARD domain.

It belongs to the NLRP family. Interacts with DPP9; leading to inhibit activation of the inflammasome. DPP9 acts via formation of a ternary complex, composed of a DPP9 homodimer, one full-length Nlrp1b protein, and one cleaved C-terminus of Nlrp1b (NACHT, LRR and PYD domains-containing protein 1b, C-terminus). Interacts with DPP8; leading to inhibit activation of the inflammasome, probably via formation of a ternary complex with DPP8. Interacts (via LRR repeats) with BCL2 and BCL2L1 (via the loop between motifs BH4 and BH3). Interacts with NOD2; this interaction may increase IL1B release. Interacts with EIF2AK2/PKR; this interaction requires EIF2AK2 activity, is accompanied by EIF2AK2 autophosphorylation and promotes inflammasome assembly in response to B.anthracis lethal toxin. Interacts with MEFV; this interaction targets Nlrp1b to degradation by autophagy, hence preventing excessive IL1B- and IL18-mediated inflammation. In terms of assembly, interacts with the C-terminal part of Nlrp1b (NACHT, LRR and PYD domains-containing protein 1b, C-terminus) in absence of pathogens and other damage-associated signals. As to quaternary structure, interacts with the N-terminal part of Nlrp1b (NACHT, LRR and PYD domains-containing protein 1b, N-terminus) in absence of pathogens and other damage-associated signals. Homomultimer; forms the Nlrp1b inflammasome polymeric complex, a filament composed of homopolymers of this form in response to pathogens and other damage-associated signals. The Nlrp1b inflammasome polymeric complex directly recruits pro-caspase-1 (proCASP1) independently of PYCARD/ASC. Interacts (via CARD domain) with CASP1 (via CARD domain); leading to CASP1 activation. Post-translationally, autocatalytically cleaved. Autocatalytic cleavage in FIIND region occurs constitutively, prior to activation signals, and is required for inflammasome activity (IL1B release), possibly by facilitating CASP1 binding. Both N- and C-terminal parts remain associated non-covalently. In terms of processing, ubiquitinated by the N-end rule pathway in response to pathogens and other damage-associated signals, leading to its degradation by the proteasome and subsequent release of the cleaved C-terminal part of the protein (NACHT, LRR and PYD domains-containing protein 1b, C-terminus), which polymerizes and forms the Nlrp1b inflammasome. (Microbial infection) Cleavage by B.anthracis lethal toxin (LT) endopeptidase promotes ubiquitination and degradation of the N-terminal part, releasing the cleaved C-terminal part of the protein (NACHT, LRR and PYD domains-containing protein 1b, C-terminus), which polymerizes and forms the Nlrp1b inflammasome. As to expression, expressed in macrophages.

The protein resides in the cytoplasm. It localises to the cytosol. It is found in the inflammasome. With respect to regulation, activated by cleavage by B.anthracis lethal toxin (LT) endopeptidase. Cleavage by LT promotes ubiquitination and degradation of the N-terminal part, releasing the cleaved C-terminal part of the protein (NACHT, LRR and PYD domains-containing protein 1b, C-terminus), which polymerizes and forms the Nlrp1b inflammasome. Nlrp1b inflammasome is inhibited by DPP8 and DPP9, which sequester the C-terminal fragment of Nlrp1b (NACHT, LRR and PYD domains-containing protein 1b, C-terminus) in a ternary complex, thereby preventing Nlrp1b oligomerization and activation. Nlrp1b inflammasome is activated by Val-boroPro (Talabostat, PT-100), an inhibitor of dipeptidyl peptidases DPP8 and DPP9. Val-boroPro relieves inhibition of DPP8 and/or DPP9 by promoting disruption of the ternary complex, releasing its C-terminal part from autoinhibition. Activated by metabolic inhibitors, such as 2-deoxy-D-glucose and sodium azide. Not activated by muramyl dipeptide, nor by full-length bacterial peptidoglycan. Acts as the sensor component of the Nlrp1b inflammasome, which mediates inflammasome activation in response to various pathogen-associated signals, leading to subsequent pyroptosis. Inflammasomes are supramolecular complexes that assemble in the cytosol in response to pathogens and other damage-associated signals and play critical roles in innate immunity and inflammation. Acts as a recognition receptor (PRR): recognizes specific pathogens and other damage-associated signals, such as B.anthracis lethal toxin (LT) or Val-boroPro inhibitor, and mediates the formation of the inflammasome polymeric complex. In response to pathogen-associated signals, the N-terminal part of Nlrp1b is degraded by the proteasome, releasing the cleaved C-terminal part of the protein (NACHT, LRR and PYD domains-containing protein 1b, C-terminus), which polymerizes to initiate the formation of the inflammasome complex: the inflammasome directly recruits pro-caspase-1 (proCASP1) independently of PYCARD/ASC and promotes caspase-1 (CASP1) activation, which subsequently cleaves and activates inflammatory cytokines IL1B and IL18 and gasdermin-D (GSDMD), leading to pyroptosis. In the absence of GSDMD expression, the Nlrp1b inflammasome is able to recruit and activate CASP8, leading to activation of gasdermin-E (GSDME). Activation of Nlrp1b inflammasome is also required for HMGB1 secretion; the active cytokines and HMGB1 stimulate inflammatory responses. Primary mediator of macrophage susceptibility to B.anthracis LT: in response to B.anthracis infection, macrophages and dendritic cells release IL1B and undergo pyroptosis. This early inflammatory response to the toxin increases resistance to infection by B.anthracis spores. Its function is as follows. Constitutes the precursor of the Nlrp1b inflammasome, which mediates autoproteolytic processing within the FIIND domain to generate the N-terminal and C-terminal parts, which are associated non-covalently in absence of pathogens and other damage-associated signals. In terms of biological role, regulatory part that prevents formation of the Nlrp1b inflammasome: in absence of pathogens and other damage-associated signals, interacts with the C-terminal part of Nlrp1b (NACHT, LRR and PYD domains-containing protein 1b, C-terminus), preventing activation of the Nlrp1b inflammasome. In response to pathogen-associated signals, this part is ubiquitinated by the N-end rule pathway and degraded by the proteasome, releasing the cleaved C-terminal part of the protein, which polymerizes and forms the Nlrp1b inflammasome. Functionally, constitutes the active part of the Nlrp1b inflammasome. In absence of pathogens and other damage-associated signals, interacts with the N-terminal part of Nlrp1b (NACHT, LRR and PYD domains-containing protein 1b, N-terminus), preventing activation of the Nlrp1b inflammasome. In response to pathogen-associated signals, the N-terminal part of Nlrp1b is degraded by the proteasome, releasing this form, which polymerizes to form the Nlrp1b inflammasome complex: the Nlrp1b inflammasome complex then directly recruits pro-caspase-1 (proCASP1) and promotes caspase-1 (CASP1) activation, leading to gasdermin-D (GSDMD) cleavage and subsequent pyroptosis. The polypeptide is NACHT, LRR and PYD domains-containing protein 1b allele 5 (Nlrp1b) (Mus musculus (Mouse)).